The following is a 98-amino-acid chain: Integration host factor subunit alpha (98 aa).

A disordered region spans residues 54–74 (LRDKSSRPGRNPKTGESVPVS).

This sequence belongs to the bacterial histone-like protein family. Heterodimer of an alpha and a beta chain.

In terms of biological role, this protein is one of the two subunits of integration host factor, a specific DNA-binding protein that functions in genetic recombination as well as in transcriptional and translational control. In Pasteurella multocida (strain Pm70), this protein is Integration host factor subunit alpha (ihfA).